The sequence spans 778 residues: Exo-beta-D-glucosaminidase (778 aa).

Substrate-binding positions include Y55, 104–105 (GE), 180–181 (DE), E308, E349, and Y381. E181 acts as the Proton donor in catalysis. Residue E349 is the Nucleophile of the active site.

Belongs to the glycosyl hydrolase 35 family. In terms of assembly, homodimer.

It is found in the cytoplasm. The catalysed reaction is beta-D-glucosaminyl-(1-&gt;4)-N-acetyl-D-glucosamine + H2O = D-glucosamine + N-acetyl-D-glucosamine. Its pathway is glycan degradation; chitin degradation. Its function is as follows. Exo-type enzyme that specifically cleaves the non-reducing terminal glycosidic bond of chitooligosaccharides. Catalyzes the hydrolysis of GlcN-GlcNAc to glucosamine (GlcN) and N-acetylglucosamine (GlcNAc). Involved in chitin degradation. Can also hydrolyze chitosan and chitooligosaccharides of various chain lengths. In Pyrococcus horikoshii (strain ATCC 700860 / DSM 12428 / JCM 9974 / NBRC 100139 / OT-3), this protein is Exo-beta-D-glucosaminidase.